The following is a 490-amino-acid chain: GTPase Der (490 aa).

EngA-type G domains are found at residues 3-166 and 203-376; these read PVVA…MEDL and IKLA…DSST. Residues 9 to 16, 56 to 60, 118 to 121, 209 to 216, 256 to 260, and 321 to 324 contribute to the GTP site; these read GRPNVGKS, DTGGI, NKTD, DTAGV, and NKWD. Positions 377 to 461 constitute a KH-like domain; sequence RRVGTSMLTR…PIRIQFKEGE (85 aa).

It belongs to the TRAFAC class TrmE-Era-EngA-EngB-Septin-like GTPase superfamily. EngA (Der) GTPase family. In terms of assembly, associates with the 50S ribosomal subunit.

GTPase that plays an essential role in the late steps of ribosome biogenesis. This is GTPase Der from Escherichia coli O7:K1 (strain IAI39 / ExPEC).